The sequence spans 20 residues: GPPKVAPGKXISASFGGEWL.

Residues 1–20 (GPPKVAPGKXISASFGGEWL) form a disordered region.

This sequence belongs to the expansin family. Expansin B subfamily.

The protein resides in the secreted. The protein localises to the cell wall. It localises to the membrane. In terms of biological role, may aid fertilization by loosening the cell wall of the stigma and style, thereby facilitating penetration of the pollen tube. Acts selectively on grass cell walls, which are relatively poor in pectins and xyloglucans and rich in glucuronoarabinoxylans and (1-3),(1-4)-beta-D-glucans, when compared with cell walls of other angiosperms, including other monocots. In Paspalum notatum (Bahia grass), this protein is Expansin-B.